Consider the following 200-residue polypeptide: Phospholipase A2 inhibitor gamma subunit A (200 aa).

The first 19 residues, 1–19, serve as a signal peptide directing secretion; sequence MKSLHTICLLFIFIARGNS. Cystine bridges form between Cys22-Cys46, Cys25-Cys32, Cys39-Cys67, Cys73-Cys94, Cys95-Cys100, Cys118-Cys143, Cys136-Cys165, and Cys169-Cys191. Asn176 carries N-linked (GlcNAc...) asparagine glycosylation.

It belongs to the CNF-like-inhibitor family. As to quaternary structure, occurs as a mixture of oligomers. Tetrameric arrangement appears to be the predominant quaternary structure. Expressed by the liver.

The protein resides in the secreted. Functionally, inhibits the enzymatic activity of phospholipase A2 (PA2). In Gloydius brevicaudus siniticus (Chinese mamushi), this protein is Phospholipase A2 inhibitor gamma subunit A.